A 175-amino-acid polypeptide reads, in one-letter code: Alpha-crystallin B chain (175 aa).

Met-1 carries the post-translational modification N-acetylmethionine. At Ser-19 the chain carries Phosphoserine. The O-linked (GlcNAc) serine glycan is linked to Ser-41. Residues Ser-45 and Ser-59 each carry the phosphoserine modification. A sHSP domain is found at 56-164 (RAPSWIDTGL…PERTIPITRE (109 aa)). Position 83 (His-83) interacts with Zn(2+). N6-acetyllysine is present on Lys-92. Residues His-104, Glu-106, His-111, and His-119 each coordinate Zn(2+). The segment at 139–175 (SDGVLTMNGPRKQASGPERTIPITREEKPAVTAAPKK) is disordered. An N6-acetyllysine modification is found at Lys-166. Thr-170 is a glycosylation site (O-linked (GlcNAc) threonine).

The protein belongs to the small heat shock protein (HSP20) family. As to quaternary structure, heteromer composed of three CRYAA and one CRYAB subunits. Aggregates with homologous proteins, including the small heat shock protein HSPB1, to form large heteromeric complexes. Inter-subunit bridging via zinc ions enhances stability, which is crucial as there is no protein turn over in the lens. Interacts with HSPBAP1 and TTN/titin. Interacts with TMEM109; in the cellular response to DNA damage. Interacts with DES; binds rapidly during early stages of DES filament assembly and a reduced binding seen in the later stages. Interacts with ATP6V1A and with MTOR, forming a ternary complex.

Its subcellular location is the cytoplasm. The protein localises to the nucleus. It localises to the secreted. The protein resides in the lysosome. In terms of biological role, may contribute to the transparency and refractive index of the lens. Has chaperone-like activity, preventing aggregation of various proteins under a wide range of stress conditions. In lens epithelial cells, stabilizes the ATP6V1A protein, preventing its degradation by the proteasome. This Ovis aries (Sheep) protein is Alpha-crystallin B chain (CRYAB).